An 814-amino-acid polypeptide reads, in one-letter code: DNA replication licensing factor Mcm6 (814 aa).

The C4-type zinc finger occupies C152 to C179. Positions L339–I545 constitute an MCM domain. Residues S392, T393, A394, K395, S396, and N497 each contribute to the ATP site. The short motif at S521–D524 is the Arginine finger element. R612 and E615 together coordinate ADP. The disordered stretch occupies residues D656–A696. Residues L659–E679 are compositionally biased toward acidic residues.

The protein belongs to the MCM family. As to quaternary structure, component of the Mcm2-7 complex. The complex forms a toroidal hexameric ring with the proposed subunit order Mcm2-Mcm6-Mcm4-Mcm7-Mcm3-Mcm5 (By simililarity). The heterodimers of Mcm4/Mcm6 and Mcm3/Mcm5 interact with Mcm2 and Mcm7.

Its subcellular location is the nucleus. It catalyses the reaction ATP + H2O = ADP + phosphate + H(+). Functionally, acts as a component of the MCM2-7 complex (MCM complex) which is the replicative helicase essential for 'once per cell cycle' DNA replication initiation and elongation in eukaryotic cells. Core component of CDC45-MCM-GINS (CMG) helicase, the molecular machine that unwinds template DNA during replication, and around which the replisome is built. The active ATPase sites in the MCM2-7 ring are formed through the interaction surfaces of two neighboring subunits such that a critical structure of a conserved arginine finger motif is provided in trans relative to the ATP-binding site of the Walker A box of the adjacent subunit. The six ATPase active sites, however, are likely to contribute differentially to the complex helicase activity. The chain is DNA replication licensing factor Mcm6 from Anopheles gambiae (African malaria mosquito).